A 147-amino-acid polypeptide reads, in one-letter code: MASSLKIWGTLLALLCILCTLLVQSKEVSWREFMKQHYLSPSREFREYKCDVLMRENEALKDKSSHMFIYISWYKIEHICTSDNWMDRFRNAYVWVQNPLKVLKCHQENSKNSYTESRSFNYIEFHCSMDGYVDSIEDLKMVEPIGN.

Residues 1–25 (MASSLKIWGTLLALLCILCTLLVQS) form the signal peptide.

In terms of tissue distribution, epididymis.

Its subcellular location is the secreted. In terms of biological role, possible function in sperm maturation. The protein is Epididymal secretory protein E3-beta (EDDM3B) of Homo sapiens (Human).